Here is a 480-residue protein sequence, read N- to C-terminus: MADLQRFLQDRCLGVSNLPQKGRSLFTARDFRPGEVILSQKPYICVPNNTSSESRCDGCFKTNNLKKCSACQVVWYCGSSCQKSEWKLHRDECKALTRLEKEKRKFVTPTIRLMVRLYIKRNLQNEKVLPITTTDNYSLVEALVSHMSEIDEKQMLLYAQMANLVNLILQFPSVDLREIAENFSKFSCNAHSICDSELRPQGIGLFPLVSIINHSCSPNAVLVFEEQMAVVRAMDNISKDSEITISYIETAGSTLTRQKSLKEQYLFHCQCARCSNFGKPHDIEESAILEGYRCANEKCTGFLLRDPEEKGFVCQKCLLLRSKEEVKKLASDLKTVSEKAPTSPSAEDKQAAIELYKTIEKLQVKLYHSFSIPLMRTREKLLKMLMDVEIWREALNYCRLIVPVYQRVYPATHPLIGLQFYTQGKLEWLLGETKEAVSSLIKAFDILRISHGISTPFMKELSAKLEEARAEASYKQLALH.

An SET domain is found at 11–248 (RCLGVSNLPQ…KDSEITISYI (238 aa)). Positions 56, 59, 68, 71, 77, 81, 89, and 93 each coordinate Zn(2+). The MYND-type zinc finger occupies 56-93 (CDGCFKTNNLKKCSACQVVWYCGSSCQKSEWKLHRDEC).

It belongs to the class V-like SAM-binding methyltransferase superfamily. Histone-lysine methyltransferase family. SET2 subfamily.

The protein localises to the nucleus. The protein resides in the chromosome. The enzyme catalyses L-lysyl-[histone] + S-adenosyl-L-methionine = N(6)-methyl-L-lysyl-[histone] + S-adenosyl-L-homocysteine + H(+). Functionally, histone methyltransferase. This Arabidopsis thaliana (Mouse-ear cress) protein is Histone-lysine N-methyltransferase ASHR1 (ASHR1).